The chain runs to 130 residues: Protachykinin-1 (130 aa).

The N-terminal stretch at M1–A19 is a signal peptide. Residues E20–A56 constitute a propeptide that is removed on maturation. M68 and M107 each carry methionine amide.

Belongs to the tachykinin family. In terms of processing, the substance P form is cleaved at Pro-59 by the prolyl endopeptidase FAP (seprase) activity (in vitro). Substance P is also cleaved and degraded by Angiotensin-converting enzyme (ACE) and neprilysin (MME).

Its subcellular location is the secreted. Functionally, tachykinins are active peptides which excite neurons, evoke behavioral responses, are potent vasodilators and secretagogues, and contract (directly or indirectly) many smooth muscles. The protein is Protachykinin-1 (TAC1) of Mesocricetus auratus (Golden hamster).